We begin with the raw amino-acid sequence, 137 residues long: Large ribosomal subunit protein uL16 (137 aa).

Belongs to the universal ribosomal protein uL16 family. Part of the 50S ribosomal subunit.

In terms of biological role, binds 23S rRNA and is also seen to make contacts with the A and possibly P site tRNAs. The polypeptide is Large ribosomal subunit protein uL16 (Thioalkalivibrio sulfidiphilus (strain HL-EbGR7)).